We begin with the raw amino-acid sequence, 204 residues long: LexA repressor (204 aa).

Positions 28–48 (VREIGEAVGLASSSTVHGHLD) form a DNA-binding region, H-T-H motif. Residues S126 and K164 each act as for autocatalytic cleavage activity in the active site.

It belongs to the peptidase S24 family. Homodimer.

It carries out the reaction Hydrolysis of Ala-|-Gly bond in repressor LexA.. Its function is as follows. Represses a number of genes involved in the response to DNA damage (SOS response), including recA and lexA. In the presence of single-stranded DNA, RecA interacts with LexA causing an autocatalytic cleavage which disrupts the DNA-binding part of LexA, leading to derepression of the SOS regulon and eventually DNA repair. The chain is LexA repressor from Exiguobacterium sibiricum (strain DSM 17290 / CCUG 55495 / CIP 109462 / JCM 13490 / 255-15).